The following is a 315-amino-acid chain: ATP synthase gamma chain (315 aa).

F-type ATPases have 2 components, CF(1) - the catalytic core - and CF(0) - the membrane proton channel. CF(1) has five subunits: alpha(3), beta(3), gamma(1), delta(1), epsilon(1). CF(0) has four main subunits: a(1), b(1), b'(1) and c(9-12).

The protein resides in the cellular thylakoid membrane. Functionally, produces ATP from ADP in the presence of a proton gradient across the membrane. The gamma chain is believed to be important in regulating ATPase activity and the flow of protons through the CF(0) complex. Its function is as follows. The complex from the organism is particularly stable to disruption and remains functional after 6 hrs at 55 degrees Celsius. The chain is ATP synthase gamma chain from Thermosynechococcus vestitus (strain NIES-2133 / IAM M-273 / BP-1).